We begin with the raw amino-acid sequence, 255 residues long: Pyrroloquinoline-quinone synthase (255 aa).

This sequence belongs to the PqqC family.

It catalyses the reaction 6-(2-amino-2-carboxyethyl)-7,8-dioxo-1,2,3,4,7,8-hexahydroquinoline-2,4-dicarboxylate + 3 O2 = pyrroloquinoline quinone + 2 H2O2 + 2 H2O + H(+). It participates in cofactor biosynthesis; pyrroloquinoline quinone biosynthesis. Its function is as follows. Ring cyclization and eight-electron oxidation of 3a-(2-amino-2-carboxyethyl)-4,5-dioxo-4,5,6,7,8,9-hexahydroquinoline-7,9-dicarboxylic-acid to PQQ. This chain is Pyrroloquinoline-quinone synthase, found in Cereibacter sphaeroides (strain ATCC 17025 / ATH 2.4.3) (Rhodobacter sphaeroides).